Reading from the N-terminus, the 580-residue chain is Type II methyltransferase M.BanIII (580 aa).

It belongs to the N(4)/N(6)-methyltransferase family.

It carries out the reaction a 2'-deoxyadenosine in DNA + S-adenosyl-L-methionine = an N(6)-methyl-2'-deoxyadenosine in DNA + S-adenosyl-L-homocysteine + H(+). Functionally, a gamma subtype methylase, recognizes the double-stranded sequence 5'-ATCGAT-3', methylates A-5 on both strands, and protects the DNA from cleavage by the BanIII endonuclease. This Aneurinibacillus aneurinilyticus (Bacillus aneurinolyticus) protein is Type II methyltransferase M.BanIII (banIIIM).